The primary structure comprises 245 residues: Biosynthetic peptidoglycan transglycosylase (245 aa).

The helical transmembrane segment at 20–42 (VYAGSVFAGAWLATQLFYLVQIA) threads the bilayer.

The protein belongs to the glycosyltransferase 51 family.

It localises to the cell inner membrane. The catalysed reaction is [GlcNAc-(1-&gt;4)-Mur2Ac(oyl-L-Ala-gamma-D-Glu-L-Lys-D-Ala-D-Ala)](n)-di-trans,octa-cis-undecaprenyl diphosphate + beta-D-GlcNAc-(1-&gt;4)-Mur2Ac(oyl-L-Ala-gamma-D-Glu-L-Lys-D-Ala-D-Ala)-di-trans,octa-cis-undecaprenyl diphosphate = [GlcNAc-(1-&gt;4)-Mur2Ac(oyl-L-Ala-gamma-D-Glu-L-Lys-D-Ala-D-Ala)](n+1)-di-trans,octa-cis-undecaprenyl diphosphate + di-trans,octa-cis-undecaprenyl diphosphate + H(+). The protein operates within cell wall biogenesis; peptidoglycan biosynthesis. Its function is as follows. Peptidoglycan polymerase that catalyzes glycan chain elongation from lipid-linked precursors. The polypeptide is Biosynthetic peptidoglycan transglycosylase (Burkholderia ambifaria (strain ATCC BAA-244 / DSM 16087 / CCUG 44356 / LMG 19182 / AMMD) (Burkholderia cepacia (strain AMMD))).